The primary structure comprises 213 residues: Protein nullo (213 aa).

In terms of tissue distribution, blastoderm. Throughout the entire cortex of the embryo although the distribution is not uniform.

In terms of biological role, actin-myosin network stability during cellularization. Might be involved in increasing actin-actin interactions or membrane-to-cytoskeleton attachments. nullo together with Sry-a and bnk may provide auxiliary functions, by acting both to stabilize a large and dynamic microfilament structure and regulate its functions. This chain is Protein nullo (nullo), found in Drosophila melanogaster (Fruit fly).